A 444-amino-acid polypeptide reads, in one-letter code: C4-dicarboxylate transport protein (444 aa).

9 consecutive transmembrane segments (helical) span residues 21-41, 57-77, 92-112, 161-181, 201-221, 234-254, 320-340, 345-365, and 368-388; these read HLYV…HFYP, LVKM…IAGM, IYFL…ANVV, GDIL…ALVG, LVSI…AFTI, LLIG…LGAV, IYMT…LSLS, LLLV…AGFI, and AATL…ILGI.

Belongs to the dicarboxylate/amino acid:cation symporter (DAACS) (TC 2.A.23) family.

The protein localises to the cell inner membrane. Functionally, responsible for the transport of dicarboxylates such as succinate, fumarate, and malate from the periplasm across the membrane. This Brucella anthropi (strain ATCC 49188 / DSM 6882 / CCUG 24695 / JCM 21032 / LMG 3331 / NBRC 15819 / NCTC 12168 / Alc 37) (Ochrobactrum anthropi) protein is C4-dicarboxylate transport protein.